Consider the following 148-residue polypeptide: Glutamyl-tRNA(Gln) amidotransferase subunit C, mitochondrial (148 aa).

This sequence belongs to the GatC family. In terms of assembly, subunit of the heterotrimeric GatCAB amidotransferase (AdT) complex, composed of A, B and C subunits.

The protein resides in the mitochondrion. It carries out the reaction L-glutamyl-tRNA(Gln) + L-glutamine + ATP + H2O = L-glutaminyl-tRNA(Gln) + L-glutamate + ADP + phosphate + H(+). In terms of biological role, allows the formation of correctly charged Gln-tRNA(Gln) through the transamidation of misacylated Glu-tRNA(Gln) in the mitochondria. The reaction takes place in the presence of glutamine and ATP through an activated gamma-phospho-Glu-tRNA(Gln). In Drosophila yakuba (Fruit fly), this protein is Glutamyl-tRNA(Gln) amidotransferase subunit C, mitochondrial.